Consider the following 225-residue polypeptide: Esterase OVCA2 (225 aa).

Residues Ser119, Asp177, and His204 each act as charge relay system in the active site.

It belongs to the LovG family. As to expression, strongly expressed in kidney and liver. Moderately expressed in brain, skin and testis. Weakly expressed in heart, lung, small intestine, spleen, stomach and thymus.

It carries out the reaction a carboxylic ester + H2O = an alcohol + a carboxylate + H(+). Its function is as follows. Exhibits ester hydrolase activity with a strong preference for long-chain alkyl ester substrates and high selectivity against a variety of short, branched, and substituted esters. Is able to hydrolyze ester bonds within a wide range of p-nitrophenyl derivatives (C2-C14) in vitro, with a strong preference toward substrates of &gt;8 carbons. In Mus musculus (Mouse), this protein is Esterase OVCA2 (Ovca2).